A 341-amino-acid chain; its full sequence is tRNA N6-adenosine threonylcarbamoyltransferase (341 aa).

The Fe cation site is built by histidine 113 and histidine 117. Residues 136 to 140 (IISGG), aspartate 169, glycine 182, and asparagine 280 each bind substrate. Aspartate 308 is a binding site for Fe cation.

Belongs to the KAE1 / TsaD family. It depends on Fe(2+) as a cofactor.

It localises to the cytoplasm. It catalyses the reaction L-threonylcarbamoyladenylate + adenosine(37) in tRNA = N(6)-L-threonylcarbamoyladenosine(37) in tRNA + AMP + H(+). Functionally, required for the formation of a threonylcarbamoyl group on adenosine at position 37 (t(6)A37) in tRNAs that read codons beginning with adenine. Is involved in the transfer of the threonylcarbamoyl moiety of threonylcarbamoyl-AMP (TC-AMP) to the N6 group of A37, together with TsaE and TsaB. TsaD likely plays a direct catalytic role in this reaction. The sequence is that of tRNA N6-adenosine threonylcarbamoyltransferase from Anaplasma marginale (strain St. Maries).